We begin with the raw amino-acid sequence, 124 residues long: Small ribosomal subunit protein uS12 (124 aa).

Aspartate 89 is subject to 3-methylthioaspartic acid. The interval 104–124 (ATGVKDRKQGRSKYGAKRPKE) is disordered. A compositionally biased stretch (basic residues) spans 113-124 (GRSKYGAKRPKE).

It belongs to the universal ribosomal protein uS12 family. As to quaternary structure, part of the 30S ribosomal subunit. Contacts proteins S8 and S17. May interact with IF1 in the 30S initiation complex.

Its function is as follows. With S4 and S5 plays an important role in translational accuracy. In terms of biological role, interacts with and stabilizes bases of the 16S rRNA that are involved in tRNA selection in the A site and with the mRNA backbone. Located at the interface of the 30S and 50S subunits, it traverses the body of the 30S subunit contacting proteins on the other side and probably holding the rRNA structure together. The combined cluster of proteins S8, S12 and S17 appears to hold together the shoulder and platform of the 30S subunit. This is Small ribosomal subunit protein uS12 from Picosynechococcus sp. (strain ATCC 27264 / PCC 7002 / PR-6) (Agmenellum quadruplicatum).